A 392-amino-acid polypeptide reads, in one-letter code: Chalcone synthase (392 aa).

Residue Cys165 is part of the active site.

It belongs to the thiolase-like superfamily. Chalcone/stilbene synthases family.

The enzyme catalyses (E)-4-coumaroyl-CoA + 3 malonyl-CoA + 3 H(+) = 2',4,4',6'-tetrahydroxychalcone + 3 CO2 + 4 CoA. Its pathway is secondary metabolite biosynthesis; flavonoid biosynthesis. Its function is as follows. The primary product of this enzyme is 4,2',4',6'-tetrahydroxychalcone (also termed naringenin-chalcone or chalcone) which can under specific conditions spontaneously isomerize into naringenin. In Persea americana (Avocado), this protein is Chalcone synthase (CHS).